Consider the following 163-residue polypeptide: MNRRTRPRTASRVAAVQALFQGEQAQESLEAVIEQFVRFRLGALPGQDGFEDGRIPDAEVPLFSRIVRAATKEQDVIDPLLITALPAEWPLARLDPVLRALLRAGACELRMKDGPPPRVVINEYLDIAHGFFQGEEPRMVNGILNALARQLRPEEFAGERQQG.

This sequence belongs to the NusB family.

Functionally, involved in transcription antitermination. Required for transcription of ribosomal RNA (rRNA) genes. Binds specifically to the boxA antiterminator sequence of the ribosomal RNA (rrn) operons. The polypeptide is Transcription antitermination protein NusB (Granulibacter bethesdensis (strain ATCC BAA-1260 / CGDNIH1)).